Here is a 223-residue protein sequence, read N- to C-terminus: Uracil-DNA glycosylase (223 aa).

D61 serves as the catalytic Proton acceptor.

The protein belongs to the uracil-DNA glycosylase (UDG) superfamily. UNG family.

The protein resides in the cytoplasm. The enzyme catalyses Hydrolyzes single-stranded DNA or mismatched double-stranded DNA and polynucleotides, releasing free uracil.. Excises uracil residues from the DNA which can arise as a result of misincorporation of dUMP residues by DNA polymerase or due to deamination of cytosine. In Histophilus somni (strain 129Pt) (Haemophilus somnus), this protein is Uracil-DNA glycosylase.